The primary structure comprises 315 residues: CRISPR-associated endonuclease Cas1 1 (315 aa).

Mn(2+)-binding residues include Glu144, His208, and Glu223.

This sequence belongs to the CRISPR-associated endonuclease Cas1 family. In terms of assembly, homodimer, forms a heterotetramer with a Cas2 homodimer. It depends on Mg(2+) as a cofactor. Mn(2+) is required as a cofactor.

Functionally, CRISPR (clustered regularly interspaced short palindromic repeat), is an adaptive immune system that provides protection against mobile genetic elements (viruses, transposable elements and conjugative plasmids). CRISPR clusters contain spacers, sequences complementary to antecedent mobile elements, and target invading nucleic acids. CRISPR clusters are transcribed and processed into CRISPR RNA (crRNA). Acts as a dsDNA endonuclease. Involved in the integration of spacer DNA into the CRISPR cassette. This chain is CRISPR-associated endonuclease Cas1 1, found in Thermus thermophilus (strain ATCC 27634 / DSM 579 / HB8).